Here is a 155-residue protein sequence, read N- to C-terminus: uncharacterized protein (155 aa).

Residues 1–17 (MMRGASKRSISSAAVLL) constitute a mitochondrion transit peptide. A disordered region spans residues 111–155 (WHRQQKRSQRRRSVAKYEQREEAARVEKEEREARDREMVRELFRR). A compositionally biased stretch (basic residues) spans 113-124 (RQQKRSQRRRSV). Residues 125 to 155 (AKYEQREEAARVEKEEREARDREMVRELFRR) are compositionally biased toward basic and acidic residues.

Belongs to the prokaryotic/mitochondrial release factor family.

It is found in the mitochondrion. This is an uncharacterized protein from Saccharomyces cerevisiae (strain ATCC 204508 / S288c) (Baker's yeast).